A 372-amino-acid chain; its full sequence is Aminomethyltransferase (372 aa).

Belongs to the GcvT family. In terms of assembly, the glycine cleavage system is composed of four proteins: P, T, L and H.

It catalyses the reaction N(6)-[(R)-S(8)-aminomethyldihydrolipoyl]-L-lysyl-[protein] + (6S)-5,6,7,8-tetrahydrofolate = N(6)-[(R)-dihydrolipoyl]-L-lysyl-[protein] + (6R)-5,10-methylene-5,6,7,8-tetrahydrofolate + NH4(+). Functionally, the glycine cleavage system catalyzes the degradation of glycine. This is Aminomethyltransferase from Synechocystis sp. (strain ATCC 27184 / PCC 6803 / Kazusa).